The chain runs to 271 residues: Calretinin (271 aa).

EF-hand domains follow at residues 16–51, 63–98, 107–142, 151–186, 195–230, and 235–270; these read LTAS…LEKA, NFGE…EENF, GSSA…LLKK, KLQE…QENF, LTSE…LYEK, and MNIQ…SEPP. Ca(2+)-binding residues include Asp29, Asp31, Asn33, Tyr35, Glu40, Asp76, Asn78, Asp80, Lys82, Glu87, Asp120, Asp122, Ser124, Tyr126, Glu131, Asp164, Asn166, Asp168, Lys170, Glu175, Asp208, Asp210, Ser212, Tyr214, and Glu219. Tyr214 carries the post-translational modification Phosphotyrosine.

It belongs to the calbindin family. In terms of tissue distribution, widely expressed in central nervous system. Expressed in type I unipolar brush cells of the cerebellum (at protein level).

Its subcellular location is the synapse. The protein resides in the cell projection. It localises to the dendrite. Functionally, calcium-binding protein involved in calcium homeostasis and signal transduction. It plays a critical role in buffering intracellular calcium levels and modulating calcium-dependent signaling pathways. Predominantly expressed in specific neuronal populations, influences synaptic plasticity and neuronal excitability, contributing to learning and memory. During embryonic development, it facilitates neuronal differentiation and maturation. The polypeptide is Calretinin (Calb2) (Mus musculus (Mouse)).